Consider the following 517-residue polypeptide: Lysophosphatidylcholine acyltransferase 2B (517 aa).

Residue N29 is glycosylated (N-linked (GlcNAc...) asparagine). 3 helical membrane passes run 70–90, 103–123, and 137–157; these read IVFLFLLLWPVALLSTINLPI, LIKPVFIFLLRLAFFCAGFLI, and IFVVAPHSTFFDAIAVIVAGL. The HXXXXD motif signature appears at 143 to 148; the sequence is HSTFFD. 2 EF-hand domains span residues 388-423 and 425-460; these read PISEPLRQLFSLFDRNQDGTIDFREYVIGLTVLCNP and NTEKILQMSFKLFDLDEDGYITEQELTTMLRAAFGV. Ca(2+) contacts are provided by D401, N403, D405, T407, E412, D438, D440, D442, Y444, and E449.

The protein belongs to the 1-acyl-sn-glycerol-3-phosphate acyltransferase family.

The protein localises to the membrane. Its pathway is lipid metabolism; phospholipid metabolism. In terms of biological role, probable acetyltransferase. The polypeptide is Lysophosphatidylcholine acyltransferase 2B (Lpcat2b) (Rattus norvegicus (Rat)).